We begin with the raw amino-acid sequence, 469 residues long: Ribulose bisphosphate carboxylase large chain (469 aa).

Asparagine 115 and threonine 165 together coordinate substrate. Residue lysine 167 is the Proton acceptor of the active site. Lysine 169 contacts substrate. Positions 193, 195, and 196 each coordinate Mg(2+). N6-carboxylysine is present on lysine 193. Catalysis depends on histidine 286, which acts as the Proton acceptor. Arginine 287, histidine 319, and serine 371 together coordinate substrate.

The protein belongs to the RuBisCO large chain family. Type I subfamily. Heterohexadecamer of 8 large chains and 8 small chains. Requires Mg(2+) as cofactor.

Its subcellular location is the plastid. The protein localises to the organellar chromatophore. It carries out the reaction 2 (2R)-3-phosphoglycerate + 2 H(+) = D-ribulose 1,5-bisphosphate + CO2 + H2O. The enzyme catalyses D-ribulose 1,5-bisphosphate + O2 = 2-phosphoglycolate + (2R)-3-phosphoglycerate + 2 H(+). Functionally, ruBisCO catalyzes two reactions: the carboxylation of D-ribulose 1,5-bisphosphate, the primary event in carbon dioxide fixation, as well as the oxidative fragmentation of the pentose substrate. Both reactions occur simultaneously and in competition at the same active site. This chain is Ribulose bisphosphate carboxylase large chain, found in Paulinella chromatophora.